We begin with the raw amino-acid sequence, 284 residues long: MKRGCAIAVMICGLITSVSAASAADLIVQEPVFEPLPQPALAGWYLRGDIGYNFKSKTGGKWDFWNQFEEPYRGVDDTFNYDDFSLKGGASYGVGVGYRFNDMLRTDLTLDYFRASINGRTNCRSYVKSSHGLNPVEDNCHYEDNSKASVWTAMANAYVDLPRVGPLTPYLGAGIGAAYVKYDTWKTSEICPTCTLQSDKDGFDSWRFAMALMAGVSYDLTDQLKLDLGYRYLRVNGGNAYGYDEQDRQVINQYGQGAGADGPQAKDNGFNIHTVRAGLRYEFR.

Residues 1–23 (MKRGCAIAVMICGLITSVSAASA) form the signal peptide.

It belongs to the surface antigen msp4 family.

This is an uncharacterized protein from Brucella abortus (strain 2308).